We begin with the raw amino-acid sequence, 389 residues long: Succinate--CoA ligase [ADP-forming] subunit beta (389 aa).

The 236-residue stretch at 9-244 folds into the ATP-grasp domain; sequence KQLFADYGLP…ETQEDPREVE (236 aa). Residues K46, 53–55, E99, G102, and E107 contribute to the ATP site; that span reads GRG. Mg(2+) is bound by residues N199 and D213. Substrate is bound by residues N264 and 321 to 323; that span reads GIV.

Belongs to the succinate/malate CoA ligase beta subunit family. Heterotetramer of two alpha and two beta subunits. The cofactor is Mg(2+).

The enzyme catalyses succinate + ATP + CoA = succinyl-CoA + ADP + phosphate. The catalysed reaction is GTP + succinate + CoA = succinyl-CoA + GDP + phosphate. It participates in carbohydrate metabolism; tricarboxylic acid cycle; succinate from succinyl-CoA (ligase route): step 1/1. Its function is as follows. Succinyl-CoA synthetase functions in the citric acid cycle (TCA), coupling the hydrolysis of succinyl-CoA to the synthesis of either ATP or GTP and thus represents the only step of substrate-level phosphorylation in the TCA. The beta subunit provides nucleotide specificity of the enzyme and binds the substrate succinate, while the binding sites for coenzyme A and phosphate are found in the alpha subunit. The polypeptide is Succinate--CoA ligase [ADP-forming] subunit beta (Tolumonas auensis (strain DSM 9187 / NBRC 110442 / TA 4)).